The sequence spans 273 residues: Phosphate import ATP-binding protein PstB (273 aa).

Residues 18 to 257 (ISLQNVTISY…EFDKTKKIFN (240 aa)) enclose the ABC transporter domain. 50–57 (GPSGCGKS) contributes to the ATP binding site.

It belongs to the ABC transporter superfamily. Phosphate importer (TC 3.A.1.7) family. In terms of assembly, the complex is composed of two ATP-binding proteins (PstB), two transmembrane proteins (PstC and PstA) and a solute-binding protein (PstS).

It localises to the cell inner membrane. It carries out the reaction phosphate(out) + ATP + H2O = ADP + 2 phosphate(in) + H(+). In terms of biological role, part of the ABC transporter complex PstSACB involved in phosphate import. Responsible for energy coupling to the transport system. In Prochlorococcus marinus (strain SARG / CCMP1375 / SS120), this protein is Phosphate import ATP-binding protein PstB.